The chain runs to 404 residues: Multidrug resistance protein MdtG (404 aa).

11 consecutive transmembrane segments (helical) span residues 19-39, 56-76, 90-110, 113-133, 144-164, 171-191, 222-242, 254-274, 288-308, 317-337, and 376-396; these read LGCFLTGAAFSLVMPFLPLYV, LVFSITFLFSAIASPFWGGLA, LGMAIVMLLMGMAQNIWQFLI, ALLGLLGGFIPNANALIATQV, TLSTGGVSGALLGPLAGGLLA, PVFFITASVLFICFLLTFFFI, LFVTTLIIQVATGSIAPILTL, IAFISGMIASVPGVAALLSAP, ILIVALIISVLLLIPMSFVQT, FLLGAADGALLPAVQTLLVYN, and AVFCVTAGVVLFNAIYSWNSL.

This sequence belongs to the major facilitator superfamily. DHA1 family. MdtG (TC 2.A.1.2.20) subfamily.

The protein resides in the cell inner membrane. The chain is Multidrug resistance protein MdtG from Salmonella dublin (strain CT_02021853).